A 56-amino-acid chain; its full sequence is Large ribosomal subunit protein bL32 (56 aa).

The tract at residues 1-37 (MAVQQNKKSRSKRGMRRSHDALSTAQLSVDATSGELH) is disordered. Residues 7–16 (KKSRSKRGMR) show a composition bias toward basic residues. The span at 21 to 31 (ALSTAQLSVDA) shows a compositional bias: polar residues.

Belongs to the bacterial ribosomal protein bL32 family.

This Shewanella loihica (strain ATCC BAA-1088 / PV-4) protein is Large ribosomal subunit protein bL32.